Here is a 609-residue protein sequence, read N- to C-terminus: Large ribosomal subunit assembly factor BipA (609 aa).

The tr-type G domain occupies 3–198; it reads QNIRNIAIIA…AIIKYAPAPN (196 aa). GTP contacts are provided by residues 15 to 20 and 128 to 131; these read DHGKTT and NKID.

Belongs to the TRAFAC class translation factor GTPase superfamily. Classic translation factor GTPase family. BipA subfamily. Monomer.

It localises to the cytoplasm. It carries out the reaction GTP + H2O = GDP + phosphate + H(+). In terms of biological role, a 50S ribosomal subunit assembly protein with GTPase activity, required for 50S subunit assembly at low temperatures, may also play a role in translation. Binds GTP and analogs. Binds the 70S ribosome between the 30S and 50S subunits, in a similar position as ribosome-bound EF-G; it contacts a number of ribosomal proteins, both rRNAs and the A-site tRNA. This is Large ribosomal subunit assembly factor BipA from Buchnera aphidicola subsp. Schizaphis graminum (strain Sg).